The following is a 127-amino-acid chain: Snaclec CHH-B subunit alpha (127 aa).

Intrachain disulfides connect Cys-4–Cys-15, Cys-32–Cys-120, and Cys-95–Cys-112. Residues 11 to 121 form the C-type lectin domain; the sequence is YDRYCYKPFK…CEQQHSFICK (111 aa).

This sequence belongs to the snaclec family. Heterodimer of subunits alpha and beta; disulfide-linked. In terms of tissue distribution, expressed by the venom gland.

It localises to the secreted. Binds to the subunit GPIbalpha (GP1BA) of the platelet GPIb/V/IX receptor system. It inhibits ristocetin- and vWF-induced platelet aggregation in platelet-rich plasma by inhibiting the binding of vWF to GPIbalpha. In Crotalus horridus (Timber rattlesnake), this protein is Snaclec CHH-B subunit alpha.